Consider the following 173-residue polypeptide: Co-chaperone protein HscB homolog (173 aa).

One can recognise a J domain in the interval 5–77 (SHFALFDLEP…SQRARYLLSL (73 aa)).

This sequence belongs to the HscB family. Interacts with HscA and stimulates its ATPase activity.

Functionally, co-chaperone involved in the maturation of iron-sulfur cluster-containing proteins. Seems to help targeting proteins to be folded toward HscA. In Azotobacter vinelandii (strain DJ / ATCC BAA-1303), this protein is Co-chaperone protein HscB homolog.